The following is a 207-amino-acid chain: Outer-membrane lipoprotein LolB (207 aa).

The N-terminal stretch at 1–21 (MTLPDFRLIRLLPLASLVLTA) is a signal peptide. The N-palmitoyl cysteine moiety is linked to residue C22. C22 is lipidated: S-diacylglycerol cysteine.

The protein belongs to the LolB family. In terms of assembly, monomer.

It is found in the cell outer membrane. Plays a critical role in the incorporation of lipoproteins in the outer membrane after they are released by the LolA protein. The polypeptide is Outer-membrane lipoprotein LolB (Salmonella arizonae (strain ATCC BAA-731 / CDC346-86 / RSK2980)).